Consider the following 88-residue polypeptide: Small ribosomal subunit protein uS17 (88 aa).

It belongs to the universal ribosomal protein uS17 family. Part of the 30S ribosomal subunit.

Its function is as follows. One of the primary rRNA binding proteins, it binds specifically to the 5'-end of 16S ribosomal RNA. This Nitrosospira multiformis (strain ATCC 25196 / NCIMB 11849 / C 71) protein is Small ribosomal subunit protein uS17.